The following is a 331-amino-acid chain: Glycerol-3-phosphate dehydrogenase [NAD(P)+] (331 aa).

3 residues coordinate NADPH: Trp11, Arg30, and Lys105. Sn-glycerol 3-phosphate-binding residues include Lys105, Gly134, and Ser136. Position 138 (Ala138) interacts with NADPH. Sn-glycerol 3-phosphate-binding residues include Lys189, Asp242, Ser252, Arg253, and Asn254. Residue Lys189 is the Proton acceptor of the active site. Arg253 lines the NADPH pocket. NADPH is bound by residues Val277 and Glu279.

It belongs to the NAD-dependent glycerol-3-phosphate dehydrogenase family.

The protein localises to the cytoplasm. It catalyses the reaction sn-glycerol 3-phosphate + NAD(+) = dihydroxyacetone phosphate + NADH + H(+). The enzyme catalyses sn-glycerol 3-phosphate + NADP(+) = dihydroxyacetone phosphate + NADPH + H(+). Its pathway is membrane lipid metabolism; glycerophospholipid metabolism. Functionally, catalyzes the reduction of the glycolytic intermediate dihydroxyacetone phosphate (DHAP) to sn-glycerol 3-phosphate (G3P), the key precursor for phospholipid synthesis. The sequence is that of Glycerol-3-phosphate dehydrogenase [NAD(P)+] from Herminiimonas arsenicoxydans.